The chain runs to 156 residues: MARRRRAEVRPLQPDLVYQDVLVSAMINKIMRDGKKNLASRIFYGACRLVQERTGQEPLKVFKQAFDNVKPRVEVRSRRVGGSTYQVPVEPTERRKQSLALRWMLSAVEGRPERTAIERLAGEMMDAAQGRGGAIKKKDDVERMAEANRAYAHYRW.

It belongs to the universal ribosomal protein uS7 family. Part of the 30S ribosomal subunit. Contacts proteins S9 and S11.

In terms of biological role, one of the primary rRNA binding proteins, it binds directly to 16S rRNA where it nucleates assembly of the head domain of the 30S subunit. Is located at the subunit interface close to the decoding center, probably blocks exit of the E-site tRNA. The sequence is that of Small ribosomal subunit protein uS7 from Deinococcus geothermalis (strain DSM 11300 / CIP 105573 / AG-3a).